Consider the following 965-residue polypeptide: 26S proteasome non-ATPase regulatory subunit 1 (965 aa).

PC repeat units lie at residues 380–413, 418–452, 454–488, 489–523, 560–595, 630–664, 665–706, and 708–738; these read NAVASLGLIHHGQESSAMKVLEPYLPKESVEGFG, GAMLAYGLIHAKHGDATAMSTLAQWLKTAENEPVR, GACLGFGVAGLGSSSVSNYEKVREVLQRDEAVSGE, SAGIAMGLIMAGHLNQEVFNELKQYTVDTQHDKTQ, TGICMLSMAYAGTGSPDVVRRLLEKVATDPNLDVKR, GAAMALGIACAGTGNMEAIALIEPMISDKEGFVRK, GALL…SLVK, and GAIIAQGLLDIGGQNAAVTMQNSDKQPDMGS. Positions 836–856 are enriched in low complexity; it reads ASASSAAAAPSSSSTSGTAPA. 2 disordered regions span residues 836–889 and 943–965; these read ASAS…LQNP and TPASSGNTENKPHSTFEININDF. A compositionally biased stretch (basic and acidic residues) spans 863–882; the sequence is EVDQPGKSKKEKAPEKDTKP.

The protein belongs to the proteasome subunit S1 family.

In terms of biological role, acts as a regulatory subunit of the 26 proteasome which is involved in the ATP-dependent degradation of ubiquitinated proteins. The chain is 26S proteasome non-ATPase regulatory subunit 1 (rpn-2) from Caenorhabditis elegans.